The chain runs to 213 residues: Orotate phosphoribosyltransferase (213 aa).

K26 contributes to the 5-phospho-alpha-D-ribose 1-diphosphate binding site. Orotate is bound at residue 34 to 35; that stretch reads FF. 5-phospho-alpha-D-ribose 1-diphosphate is bound by residues 72-73, R99, K100, K103, H105, and 124-132; these read YK and DDVITAGTA. 2 residues coordinate orotate: T128 and R156.

The protein belongs to the purine/pyrimidine phosphoribosyltransferase family. PyrE subfamily. In terms of assembly, homodimer. Mg(2+) serves as cofactor.

It carries out the reaction orotidine 5'-phosphate + diphosphate = orotate + 5-phospho-alpha-D-ribose 1-diphosphate. It functions in the pathway pyrimidine metabolism; UMP biosynthesis via de novo pathway; UMP from orotate: step 1/2. In terms of biological role, catalyzes the transfer of a ribosyl phosphate group from 5-phosphoribose 1-diphosphate to orotate, leading to the formation of orotidine monophosphate (OMP). In Yersinia enterocolitica serotype O:8 / biotype 1B (strain NCTC 13174 / 8081), this protein is Orotate phosphoribosyltransferase.